The chain runs to 167 residues: MIEELHQEVSDRGFLLTSADKLVNWGRSMSMWPMTFGLACCAVEMMNAGASRYDLDRFGVVFRGSPRQSDVIIVAGTLTNKMAPALRKVYDQMPEPRYVISMGSCANGGGYYHYSYSVVRGCDRILPVDVYIPGCPPTAEAVMYGIMQLQKKINREGQVYSGWRKRV.

Residues C40, C41, C105, and C135 each contribute to the [4Fe-4S] cluster site.

This sequence belongs to the complex I 20 kDa subunit family. As to quaternary structure, NDH-1 is composed of 14 different subunits. Subunits NuoB, C, D, E, F, and G constitute the peripheral sector of the complex. Requires [4Fe-4S] cluster as cofactor.

Its subcellular location is the cell inner membrane. It carries out the reaction a quinone + NADH + 5 H(+)(in) = a quinol + NAD(+) + 4 H(+)(out). Functionally, NDH-1 shuttles electrons from NADH, via FMN and iron-sulfur (Fe-S) centers, to quinones in the respiratory chain. The immediate electron acceptor for the enzyme in this species is believed to be ubiquinone. Couples the redox reaction to proton translocation (for every two electrons transferred, four hydrogen ions are translocated across the cytoplasmic membrane), and thus conserves the redox energy in a proton gradient. This Magnetococcus marinus (strain ATCC BAA-1437 / JCM 17883 / MC-1) protein is NADH-quinone oxidoreductase subunit B.